We begin with the raw amino-acid sequence, 452 residues long: Tissue alpha-L-fucosidase (452 aa).

The N-terminal stretch at 1–17 (MLLLLLLLLVAAAQAVA) is a signal peptide. N227, N254, N368, and N378 each carry an N-linked (GlcNAc...) asparagine glycan.

It belongs to the glycosyl hydrolase 29 family. In terms of assembly, homotetramer.

It is found in the lysosome. It carries out the reaction an alpha-L-fucoside + H2O = L-fucose + an alcohol. It catalyses the reaction a neolactoside IV(2)-alpha-Fuc-nLc4Cer(d18:1(4E)) + H2O = a neolactoside nLc4Cer(d18:1(4E)) + L-fucose. The catalysed reaction is a neolactoside IV(2)-alpha-Fuc-nLc4Cer(d18:0) + H2O = a neolactoside nLc4Cer(d18:0) + L-fucose. In terms of biological role, alpha-L-fucosidase is responsible for hydrolyzing the alpha-1,6-linked fucose joined to the reducing-end N-acetylglucosamine of the carbohydrate moieties of glycoproteins. In Mus musculus (Mouse), this protein is Tissue alpha-L-fucosidase (Fuca1).